The sequence spans 832 residues: Translation initiation factor IF-2 (832 aa).

The tract at residues 1–249 is disordered; sequence MSDDNDKPRT…GGGSSAPREK (249 aa). Positions 53 to 71 are enriched in pro residues; sequence TPAPAPEPAPEPAPAPAPA. Residues 89 to 144 show a composition bias toward basic and acidic residues; that stretch reads PQERVARLQREAEEERLKLAEDARKRDDQKAKQNADDEKKRQEENKKAEEEAEKQA. Over residues 145 to 156 the composition is skewed to low complexity; sequence AAEAEAAAAAEA. Basic and acidic residues predominate over residues 180–200; it reads PEPKRPEKKKEEKKPARGGAK. The 171-residue stretch at 333–503 folds into the tr-type G domain; sequence PRPPVVTIMG…ELQAELLELK (171 aa). The interval 342–349 is G1; the sequence is GHVDHGKT. 342-349 lines the GTP pocket; the sequence is GHVDHGKT. The G2 stretch occupies residues 367 to 371; it reads GITQH. Residues 389 to 392 are G3; that stretch reads DTPG. GTP is bound by residues 389–393 and 443–446; these read DTPGH and NKCD. Positions 443-446 are G4; it reads NKCD. Residues 479-481 are G5; it reads SAT.

This sequence belongs to the TRAFAC class translation factor GTPase superfamily. Classic translation factor GTPase family. IF-2 subfamily.

Its subcellular location is the cytoplasm. One of the essential components for the initiation of protein synthesis. Protects formylmethionyl-tRNA from spontaneous hydrolysis and promotes its binding to the 30S ribosomal subunits. Also involved in the hydrolysis of GTP during the formation of the 70S ribosomal complex. The polypeptide is Translation initiation factor IF-2 (Erythrobacter litoralis (strain HTCC2594)).